Consider the following 214-residue polypeptide: Pyridoxine/pyridoxamine 5'-phosphate oxidase (214 aa).

Substrate contacts are provided by residues 8–11 and Lys-66; that span reads RTNY. FMN contacts are provided by residues 61 to 66, 76 to 77, Arg-82, Lys-83, and Gln-105; these read RIVLIK and FT. Substrate contacts are provided by Tyr-123, Arg-127, and Ser-131. Residues 140 to 141 and Trp-184 each bind FMN; that span reads QS. 190 to 192 serves as a coordination point for substrate; sequence RLH. Position 194 (Arg-194) interacts with FMN.

Belongs to the pyridoxamine 5'-phosphate oxidase family. In terms of assembly, homodimer. The cofactor is FMN.

It catalyses the reaction pyridoxamine 5'-phosphate + O2 + H2O = pyridoxal 5'-phosphate + H2O2 + NH4(+). The enzyme catalyses pyridoxine 5'-phosphate + O2 = pyridoxal 5'-phosphate + H2O2. It participates in cofactor metabolism; pyridoxal 5'-phosphate salvage; pyridoxal 5'-phosphate from pyridoxamine 5'-phosphate: step 1/1. The protein operates within cofactor metabolism; pyridoxal 5'-phosphate salvage; pyridoxal 5'-phosphate from pyridoxine 5'-phosphate: step 1/1. Catalyzes the oxidation of either pyridoxine 5'-phosphate (PNP) or pyridoxamine 5'-phosphate (PMP) into pyridoxal 5'-phosphate (PLP). This is Pyridoxine/pyridoxamine 5'-phosphate oxidase from Burkholderia pseudomallei (strain 1106a).